Reading from the N-terminus, the 201-residue chain is Small ribosomal subunit protein uS4 (201 aa).

The tract at residues 26–47 (LSKKNYPPGQHGNNRRRKTSEY) is disordered. The region spanning 92-154 (ARLDNVVFRL…SKSLEVIADA (63 aa)) is the S4 RNA-binding domain.

Belongs to the universal ribosomal protein uS4 family. Part of the 30S ribosomal subunit. Contacts protein S5. The interaction surface between S4 and S5 is involved in control of translational fidelity.

In terms of biological role, one of the primary rRNA binding proteins, it binds directly to 16S rRNA where it nucleates assembly of the body of the 30S subunit. Its function is as follows. With S5 and S12 plays an important role in translational accuracy. The sequence is that of Small ribosomal subunit protein uS4 from Porphyromonas gingivalis (strain ATCC 33277 / DSM 20709 / CIP 103683 / JCM 12257 / NCTC 11834 / 2561).